The primary structure comprises 190 residues: Nucleoside triphosphate pyrophosphatase (190 aa).

D69 acts as the Proton acceptor in catalysis.

The protein belongs to the Maf family. The cofactor is a divalent metal cation.

It is found in the cytoplasm. It carries out the reaction a ribonucleoside 5'-triphosphate + H2O = a ribonucleoside 5'-phosphate + diphosphate + H(+). The catalysed reaction is a 2'-deoxyribonucleoside 5'-triphosphate + H2O = a 2'-deoxyribonucleoside 5'-phosphate + diphosphate + H(+). In terms of biological role, nucleoside triphosphate pyrophosphatase. May have a dual role in cell division arrest and in preventing the incorporation of modified nucleotides into cellular nucleic acids. The polypeptide is Nucleoside triphosphate pyrophosphatase (Helicobacter pylori (strain Shi470)).